The following is a 616-amino-acid chain: Homeodomain-interacting protein kinase 4 (616 aa).

Residues Y11–V347 form the Protein kinase domain. Residues L17–V25 and K40 contribute to the ATP site. Catalysis depends on D136, which acts as the Proton acceptor. The tract at residues H487–H616 is disordered. Residues K497–S512 are compositionally biased toward polar residues. Phosphoserine is present on S512. The span at R542 to G560 shows a compositional bias: basic and acidic residues.

This sequence belongs to the protein kinase superfamily. CMGC Ser/Thr protein kinase family. HIPK subfamily. Post-translationally, autophosphorylated. In terms of tissue distribution, expressed at moderate levels in lung and white adipose tissues and weakly in brain and liver.

Its subcellular location is the cytoplasm. The enzyme catalyses L-seryl-[protein] + ATP = O-phospho-L-seryl-[protein] + ADP + H(+). It catalyses the reaction L-threonyl-[protein] + ATP = O-phospho-L-threonyl-[protein] + ADP + H(+). Protein kinase that phosphorylates murine TP53 at Ser-9, and thus induces TP53 repression of BIRC5 promoter. May act as a corepressor of transcription factors (Potential). The polypeptide is Homeodomain-interacting protein kinase 4 (Hipk4) (Mus musculus (Mouse)).